The sequence spans 348 residues: Sesquiterpene synthase MGU_11447 (348 aa).

Positions 91 and 96 each coordinate Mg(2+). The short motif at 91 to 96 (DDLFVD) is the DDXXXD motif element. Arginine 184 provides a ligand contact to substrate. Asparagine 230, serine 234, and glutamate 238 together coordinate Mg(2+).

Belongs to the terpene synthase family. Mg(2+) serves as cofactor.

It catalyses the reaction (2E,6E)-farnesyl diphosphate + H2O = (+)-corvol ether B + diphosphate. The catalysed reaction is (2E,6E)-farnesyl diphosphate + H2O = (+)-corvol ether A + diphosphate. Terpene synthase that catalyzes the conversion of (2E,6E)-farnesyl diphosphate (FPP) into sesquiterpenes which are important for fungi-environment interactions. Produces a mixture consisting of 8 sesquiterpenes including corvol ethers A and B, as well as traces of epizonarene, gamma-cadinene, delta-cadinene, alpha-cadinene, alpha-cadinol, and an unidentified sesquiterpene. Produces both corvol ether A and corvol ether B in similar concentrations. In Metarhizium guizhouense (strain ARSEF 977), this protein is Sesquiterpene synthase MGU_11447.